A 115-amino-acid chain; its full sequence is Non-specific lipid-transfer protein 4.1 (115 aa).

The first 25 residues, 1 to 25 (MARAAASQLVLVALVAAMLLVAADA), serve as a signal peptide directing secretion. Intrachain disulfides connect Cys-29-Cys-77, Cys-39-Cys-54, Cys-55-Cys-97, and Cys-75-Cys-111.

The protein belongs to the plant LTP family.

Functionally, plant non-specific lipid-transfer proteins transfer phospholipids as well as galactolipids across membranes. May play a role in wax or cutin deposition in the cell walls of expanding epidermal cells and certain secretory tissues. The chain is Non-specific lipid-transfer protein 4.1 (LTP4.1) from Hordeum vulgare (Barley).